We begin with the raw amino-acid sequence, 125 residues long: Testis-specific protein LINC02914 (125 aa).

The span at 1–12 shows a compositional bias: basic and acidic residues; that stretch reads MHRKEPGARLEA. The segment at 1–45 is disordered; it reads MHRKEPGARLEATRGAARPHKQGTKPMITRPSVSQLGEGKCPSSQ.

As to expression, expressed in testes and ejaculated spermatozoa (at protein level).

It is found in the cytoplasm. The protein resides in the nucleus. The protein localises to the cell projection. It localises to the cilium. Its subcellular location is the flagellum. Functionally, may play a role in the flagellum biology. This Homo sapiens (Human) protein is Testis-specific protein LINC02914.